Here is an 89-residue protein sequence, read N- to C-terminus: Cytochrome c6 (89 aa).

Cys15, Cys18, His19, and Met61 together coordinate heme c.

This sequence belongs to the cytochrome c family. PetJ subfamily. In terms of assembly, monomer. Post-translationally, binds 1 heme c group covalently per subunit.

The protein localises to the plastid. It localises to the chloroplast thylakoid lumen. Functions as an electron carrier between membrane-bound cytochrome b6-f and photosystem I in oxygenic photosynthesis. The polypeptide is Cytochrome c6 (petJ) (Tetradesmus obliquus (Green alga)).